The chain runs to 39 residues: MKKFLTTAPVVAAIWFTLTAGILIEWNRFFPDLLFHPMG.

The helical transmembrane segment at 4–24 (FLTTAPVVAAIWFTLTAGILI) threads the bilayer.

This sequence belongs to the PsaJ family.

The protein localises to the cellular thylakoid membrane. In terms of biological role, may help in the organization of the PsaE and PsaF subunits. In Synechococcus sp. (strain CC9311), this protein is Photosystem I reaction center subunit IX.